A 369-amino-acid chain; its full sequence is MDLSIPNPVADATRQVEGGSPAGGQPLEIDALIVGAGPVGLFQVFELGLLEIKAHVIDSLKVVGGQCVELYPDKPIYDIPAVPSCTGQELTDNLLKQIEPFEPTFHLGQEVSVVERRDDGRFFVETSLGTRFITKTIFIAAGVGSFQPRTLKVDGIDKFDGKQLFYRVKDPSRFHGRNLVIVGGGDSALDWTLDLVGKAESVVMIHRRDGFRAAPASVAKMKELCEQMEMQFLVGQISGYEEKDGVLTEIKVSGADGVTRRLPLDDLLVFFGLSPKLGPIAEWGLDLERKQIKVDTEKFQTNIPGIFAVGDINTYPGKKKLILSGFHEAALAAFGAAPYIFPEKKIHMQYTTTSPKLHKVLGVESPVFD.

Positions M1–P21 are disordered. 7 residues coordinate FAD: D58, Q66, Y71, V111, F146, D311, and T352.

Belongs to the ferredoxin--NADP reductase type 2 family. As to quaternary structure, homodimer. It depends on FAD as a cofactor.

It catalyses the reaction 2 reduced [2Fe-2S]-[ferredoxin] + NADP(+) + H(+) = 2 oxidized [2Fe-2S]-[ferredoxin] + NADPH. This is Ferredoxin--NADP reductase 2 from Cupriavidus taiwanensis (strain DSM 17343 / BCRC 17206 / CCUG 44338 / CIP 107171 / LMG 19424 / R1) (Ralstonia taiwanensis (strain LMG 19424)).